A 291-amino-acid polypeptide reads, in one-letter code: Ribosomal protein L11 methyltransferase (291 aa).

The S-adenosyl-L-methionine site is built by Thr-136, Gly-159, Asp-181, and Asn-228.

This sequence belongs to the methyltransferase superfamily. PrmA family.

The protein resides in the cytoplasm. It carries out the reaction L-lysyl-[protein] + 3 S-adenosyl-L-methionine = N(6),N(6),N(6)-trimethyl-L-lysyl-[protein] + 3 S-adenosyl-L-homocysteine + 3 H(+). Functionally, methylates ribosomal protein L11. This chain is Ribosomal protein L11 methyltransferase, found in Sinorhizobium fredii (strain NBRC 101917 / NGR234).